The following is a 106-amino-acid chain: Thiosulfate sulfurtransferase GlpE (106 aa).

In terms of domain architecture, Rhodanese spans 16 to 104 (REQGAVLVDV…WRATYPDETV (89 aa)). Cysteine 64 serves as the catalytic Cysteine persulfide intermediate.

The protein belongs to the GlpE family.

It localises to the cytoplasm. It catalyses the reaction thiosulfate + hydrogen cyanide = thiocyanate + sulfite + 2 H(+). The enzyme catalyses thiosulfate + [thioredoxin]-dithiol = [thioredoxin]-disulfide + hydrogen sulfide + sulfite + 2 H(+). In terms of biological role, transferase that catalyzes the transfer of sulfur from thiosulfate to thiophilic acceptors such as cyanide or dithiols. May function in a CysM-independent thiosulfate assimilation pathway by catalyzing the conversion of thiosulfate to sulfite, which can then be used for L-cysteine biosynthesis. The protein is Thiosulfate sulfurtransferase GlpE of Pseudomonas savastanoi pv. phaseolicola (strain 1448A / Race 6) (Pseudomonas syringae pv. phaseolicola (strain 1448A / Race 6)).